A 620-amino-acid polypeptide reads, in one-letter code: 1-deoxy-D-xylulose-5-phosphate synthase (620 aa).

Residues H80 and 121–123 each bind thiamine diphosphate; that span reads GHS. Mg(2+) is bound at residue D152. Residues 153–154, N181, Y288, and E370 each bind thiamine diphosphate; that span reads GA. A Mg(2+)-binding site is contributed by N181.

The protein belongs to the transketolase family. DXPS subfamily. Homodimer. Mg(2+) serves as cofactor. It depends on thiamine diphosphate as a cofactor.

The catalysed reaction is D-glyceraldehyde 3-phosphate + pyruvate + H(+) = 1-deoxy-D-xylulose 5-phosphate + CO2. It functions in the pathway metabolic intermediate biosynthesis; 1-deoxy-D-xylulose 5-phosphate biosynthesis; 1-deoxy-D-xylulose 5-phosphate from D-glyceraldehyde 3-phosphate and pyruvate: step 1/1. Catalyzes the acyloin condensation reaction between C atoms 2 and 3 of pyruvate and glyceraldehyde 3-phosphate to yield 1-deoxy-D-xylulose-5-phosphate (DXP). This chain is 1-deoxy-D-xylulose-5-phosphate synthase, found in Shigella boydii serotype 18 (strain CDC 3083-94 / BS512).